Consider the following 209-residue polypeptide: Holliday junction branch migration complex subunit RuvA (209 aa).

The interval 1–70 (MFSYLKGEAI…EDGTYLYGFA (70 aa)) is domain I. Positions 71-149 (SAAARDLFRQ…QWRDQFSLPD (79 aa)) are domain II. Positions 149–153 (DTAAQ) are flexible linker. A domain III region spans residues 154-209 (PNAAVHEDLELTLLALGYQETEIRGAIATLSQDSILLQNDNADEWIRRAITLLSQT).

It belongs to the RuvA family. Homotetramer. Forms an RuvA(8)-RuvB(12)-Holliday junction (HJ) complex. HJ DNA is sandwiched between 2 RuvA tetramers; dsDNA enters through RuvA and exits via RuvB. An RuvB hexamer assembles on each DNA strand where it exits the tetramer. Each RuvB hexamer is contacted by two RuvA subunits (via domain III) on 2 adjacent RuvB subunits; this complex drives branch migration. In the full resolvosome a probable DNA-RuvA(4)-RuvB(12)-RuvC(2) complex forms which resolves the HJ.

It is found in the cytoplasm. Its function is as follows. The RuvA-RuvB-RuvC complex processes Holliday junction (HJ) DNA during genetic recombination and DNA repair, while the RuvA-RuvB complex plays an important role in the rescue of blocked DNA replication forks via replication fork reversal (RFR). RuvA specifically binds to HJ cruciform DNA, conferring on it an open structure. The RuvB hexamer acts as an ATP-dependent pump, pulling dsDNA into and through the RuvAB complex. HJ branch migration allows RuvC to scan DNA until it finds its consensus sequence, where it cleaves and resolves the cruciform DNA. This Picosynechococcus sp. (strain ATCC 27264 / PCC 7002 / PR-6) (Agmenellum quadruplicatum) protein is Holliday junction branch migration complex subunit RuvA.